We begin with the raw amino-acid sequence, 198 residues long: Acireductone dioxygenase (198 aa).

The Fe(2+) site is built by His-97, His-99, Glu-103, and His-141. 4 residues coordinate Ni(2+): His-97, His-99, Glu-103, and His-141.

The protein belongs to the acireductone dioxygenase (ARD) family. Monomer. It depends on Fe(2+) as a cofactor. Ni(2+) is required as a cofactor.

The catalysed reaction is 1,2-dihydroxy-5-(methylsulfanyl)pent-1-en-3-one + O2 = 3-(methylsulfanyl)propanoate + CO + formate + 2 H(+). It carries out the reaction 1,2-dihydroxy-5-(methylsulfanyl)pent-1-en-3-one + O2 = 4-methylsulfanyl-2-oxobutanoate + formate + 2 H(+). The protein operates within amino-acid biosynthesis; L-methionine biosynthesis via salvage pathway; L-methionine from S-methyl-5-thio-alpha-D-ribose 1-phosphate: step 5/6. Functionally, catalyzes 2 different reactions between oxygen and the acireductone 1,2-dihydroxy-3-keto-5-methylthiopentene (DHK-MTPene) depending upon the metal bound in the active site. Fe-containing acireductone dioxygenase (Fe-ARD) produces formate and 2-keto-4-methylthiobutyrate (KMTB), the alpha-ketoacid precursor of methionine in the methionine recycle pathway. Ni-containing acireductone dioxygenase (Ni-ARD) produces methylthiopropionate, carbon monoxide and formate, and does not lie on the methionine recycle pathway. The protein is Acireductone dioxygenase of Synechococcus elongatus (strain ATCC 33912 / PCC 7942 / FACHB-805) (Anacystis nidulans R2).